A 347-amino-acid polypeptide reads, in one-letter code: Quinolinate synthase (347 aa).

Histidine 47 and serine 68 together coordinate iminosuccinate. Cysteine 113 serves as a coordination point for [4Fe-4S] cluster. Iminosuccinate-binding positions include 139–141 and serine 156; that span reads YAN. Cysteine 200 is a binding site for [4Fe-4S] cluster. Residues 226 to 228 and threonine 243 contribute to the iminosuccinate site; that span reads HPE. Cysteine 297 serves as a coordination point for [4Fe-4S] cluster.

The protein belongs to the quinolinate synthase family. Type 1 subfamily. It depends on [4Fe-4S] cluster as a cofactor.

The protein resides in the cytoplasm. It catalyses the reaction iminosuccinate + dihydroxyacetone phosphate = quinolinate + phosphate + 2 H2O + H(+). Its pathway is cofactor biosynthesis; NAD(+) biosynthesis; quinolinate from iminoaspartate: step 1/1. In terms of biological role, catalyzes the condensation of iminoaspartate with dihydroxyacetone phosphate to form quinolinate. The chain is Quinolinate synthase from Escherichia coli O127:H6 (strain E2348/69 / EPEC).